A 712-amino-acid chain; its full sequence is Glycine--tRNA ligase beta subunit (712 aa).

It belongs to the class-II aminoacyl-tRNA synthetase family. Tetramer of two alpha and two beta subunits.

It is found in the cytoplasm. The catalysed reaction is tRNA(Gly) + glycine + ATP = glycyl-tRNA(Gly) + AMP + diphosphate. This chain is Glycine--tRNA ligase beta subunit, found in Dechloromonas aromatica (strain RCB).